A 1254-amino-acid chain; its full sequence is Zinc finger protein BRUTUS-like At1g18910 (1254 aa).

Positions 1 to 30 are disordered; it reads MGVGDPLPLPPEKNRREVNKPPDIASTSSS. The chain crosses the membrane as a helical span at residues 454 to 474; sequence IHFLPLGLLKCVIMWFSAQLP. The segment at 1013 to 1082 adopts a CHY-type zinc-finger fold; that stretch reads PHKLIFGCKH…ASCSNISCSS (70 aa). Positions 1020, 1022, 1033, 1034, 1040, 1043, 1044, 1050, 1062, 1065, 1075, 1080, 1089, 1092, 1103, 1104, 1107, 1110, 1122, 1123, 1126, 1129, 1137, and 1139 each coordinate Zn(2+). A CTCHY-type zinc finger spans residues 1084 to 1147; the sequence is MGKYYCKICK…VCREKCLEDN (64 aa). The segment at 1148–1190 adopts an RING-type; atypical zinc-finger fold; that stretch reads CPICHEYIFTSNSPVKALPCGHVMHSTCFQEYTCSHYTCPICS.

Binds zinc and iron ions.

The protein localises to the membrane. Its subcellular location is the nucleus. Its pathway is protein modification; protein ubiquitination. Its function is as follows. Probable E3 ubiquitin-protein ligase that may regulate the response to iron deficiency and thus contributes to iron homeostasis. This chain is Zinc finger protein BRUTUS-like At1g18910, found in Arabidopsis thaliana (Mouse-ear cress).